The primary structure comprises 199 residues: 3-isopropylmalate dehydratase small subunit (199 aa).

The protein belongs to the LeuD family. LeuD type 1 subfamily. As to quaternary structure, heterodimer of LeuC and LeuD.

The catalysed reaction is (2R,3S)-3-isopropylmalate = (2S)-2-isopropylmalate. Its pathway is amino-acid biosynthesis; L-leucine biosynthesis; L-leucine from 3-methyl-2-oxobutanoate: step 2/4. Its function is as follows. Catalyzes the isomerization between 2-isopropylmalate and 3-isopropylmalate, via the formation of 2-isopropylmaleate. The protein is 3-isopropylmalate dehydratase small subunit of Tolumonas auensis (strain DSM 9187 / NBRC 110442 / TA 4).